A 145-amino-acid polypeptide reads, in one-letter code: uncharacterized protein (145 aa).

This is an uncharacterized protein from Saccharomyces cerevisiae (strain ATCC 204508 / S288c) (Baker's yeast).